The sequence spans 75 residues: MNPRYRFILRFYSSKKPTFHNTAPSKTNVNVPRANKSQSKGKHKGKLLVLVGTLALVTSVISVNYQKNEPVEFLE.

Residues 19-38 (FHNTAPSKTNVNVPRANKSQ) show a composition bias toward polar residues. Residues 19 to 42 (FHNTAPSKTNVNVPRANKSQSKGK) form a disordered region. Residues 47–66 (LLVLVGTLALVTSVISVNYQ) traverse the membrane as a helical segment.

The protein localises to the membrane. This is an uncharacterized protein from Saccharomyces cerevisiae (strain ATCC 204508 / S288c) (Baker's yeast).